The following is a 1145-amino-acid chain: Protein sumv-2 (1145 aa).

Residues 1–13 (MKPGRKSLPKKNR) show a composition bias toward basic residues. Disordered stretches follow at residues 1-310 (MKPG…APPA), 429-464 (QSRTKLKGSSKEREETPAFDEESPIGGDEKRQQKAR), 999-1025 (HSASSSAAPSPVGASGRRATVTGAGSE), 1040-1059 (QIAAPSISGPPPPAPSPRTE), and 1073-1145 (ITTG…ISLI). Residues 14 to 34 (ASNITEKMPTTSTEAQSSSSK) show a composition bias toward polar residues. 2 stretches are compositionally biased toward basic and acidic residues: residues 73 to 104 (KTTEEVKSPRKSARKSELKKPEPEEKAKEPRK) and 216 to 225 (VPEKKPKIED). The segment covering 226–248 (APTTSSPKKSTPTSAPPTRASAR) has biased composition (low complexity). Over residues 455–464 (GDEKRQQKAR) the composition is skewed to basic and acidic residues. The span at 999–1013 (HSASSSAAPSPVGAS) shows a compositional bias: low complexity. Residues 1091–1102 (VIERGDFRDHRP) are compositionally biased toward basic and acidic residues. The span at 1121 to 1136 (QQPPLPSPAPPPPRGP) shows a compositional bias: pro residues.

Its function is as follows. Influences the activity of genes involved in vulval development. The chain is Protein sumv-2 from Caenorhabditis elegans.